The chain runs to 436 residues: Protein VHS2 (436 aa).

Residues 1–34 (MDTSNHNQDHDSHVAAQRENDNNYMPPSPSMSES) form a disordered region. The segment covering 7 to 21 (NQDHDSHVAAQREND) has biased composition (basic and acidic residues). Phosphoserine is present on residues Ser53, Ser61, Ser102, and Ser172. Disordered stretches follow at residues 165–195 (RALG…DHGS), 211–266 (NNNN…HMNF), 282–360 (NNAN…EEDN), and 389–436 (NDNH…DTTK). The segment covering 171-183 (RSLSSQSFDNETS) has biased composition (polar residues). Low complexity-rich tracts occupy residues 211 to 226 (NNNN…STAN), 238 to 261 (SFSS…ASPP), and 282 to 299 (NNAN…AALS). Phosphoserine is present on residues Ser299, Ser301, Ser303, and Ser325. Positions 300-312 (RSPSNQQYLLKQQ) are enriched in polar residues. Low complexity predominate over residues 401–436 (TINNNIKNSPAFTNSNPSSKSNSNSTITSMNPDTTK).

The protein to yeast MFL3.

Its subcellular location is the cytoplasm. Functionally, can suppress the synthetic lethality of the hal3 sit4 double mutation when overexpressed, suggesting that it is involved in the G1-S transition. The sequence is that of Protein VHS2 (VHS2) from Saccharomyces cerevisiae (strain ATCC 204508 / S288c) (Baker's yeast).